The primary structure comprises 291 residues: 3-hydroxy-5-phosphonooxypentane-2,4-dione thiolase (291 aa).

Catalysis depends on lysine 203, which acts as the Schiff-base intermediate with substrate.

Belongs to the DeoC/FbaB aldolase family. Homodecamer.

It localises to the cytoplasm. It catalyses the reaction dihydroxyacetone phosphate + acetyl-CoA = 3-hydroxy-2,4-dioxopentyl phosphate + CoA. Involved in the degradation of phospho-AI-2, thereby terminating induction of the lsr operon and closing the AI-2 signaling cycle. Catalyzes the transfer of an acetyl moiety from 3-hydroxy-5-phosphonooxypentane-2,4-dione to CoA to form glycerone phosphate and acetyl-CoA. This chain is 3-hydroxy-5-phosphonooxypentane-2,4-dione thiolase, found in Yersinia enterocolitica serotype O:8 / biotype 1B (strain NCTC 13174 / 8081).